The sequence spans 653 residues: Zinc finger protein 59 (653 aa).

The KRAB domain occupies Val-14–Pro-86. 16 consecutive C2H2-type zinc fingers follow at residues Tyr-172–His-194, Tyr-200–His-222, Phe-256–His-278, Tyr-284–His-306, Phe-312–His-334, Phe-340–His-362, Phe-368–His-390, Leu-396–His-418, Phe-424–His-446, Tyr-452–His-474, Phe-480–His-502, Phe-508–His-530, Phe-536–His-558, Tyr-564–His-586, Phe-592–His-614, and Phe-620–His-642.

The protein belongs to the krueppel C2H2-type zinc-finger protein family. As to expression, expressed predominantly in the testis (at protein level).

It localises to the nucleus. May have a role during differentiation processes. In Mus musculus (Mouse), this protein is Zinc finger protein 59 (Zfp59).